The following is a 129-amino-acid chain: Small ribosomal subunit protein uS11 (129 aa).

Belongs to the universal ribosomal protein uS11 family. Part of the 30S ribosomal subunit. Interacts with proteins S7 and S18. Binds to IF-3.

In terms of biological role, located on the platform of the 30S subunit, it bridges several disparate RNA helices of the 16S rRNA. Forms part of the Shine-Dalgarno cleft in the 70S ribosome. The protein is Small ribosomal subunit protein uS11 of Limosilactobacillus reuteri (strain DSM 20016) (Lactobacillus reuteri).